Consider the following 470-residue polypeptide: Cell division protein FtsA (470 aa).

The tract at residues 416–470 (NKKDTHENEVESTDEEIYQSEDNHQEHKQNHEHVQDKDKDKEESKFKKLMKSLFE) is disordered. Over residues 425–434 (VESTDEEIYQ) the composition is skewed to acidic residues. Residues 436–461 (EDNHQEHKQNHEHVQDKDKDKEESKF) show a composition bias toward basic and acidic residues.

Belongs to the FtsA/MreB family. As to quaternary structure, self-interacts. Interacts with FtsZ.

Its subcellular location is the cell membrane. Functionally, cell division protein that is involved in the assembly of the Z ring. May serve as a membrane anchor for the Z ring. This chain is Cell division protein FtsA, found in Staphylococcus aureus (strain NCTC 8325 / PS 47).